Reading from the N-terminus, the 209-residue chain is Octanoyltransferase (209 aa).

The BPL/LPL catalytic domain occupies 30-209 (DHEPEIIYLV…IQTEFNKIFK (180 aa)). Residues 69–76 (RGGKFTFH), 143–145 (AIG), and 156–158 (GVA) contribute to the substrate site. The Acyl-thioester intermediate role is filled by cysteine 174.

Belongs to the LipB family.

Its subcellular location is the cytoplasm. The enzyme catalyses octanoyl-[ACP] + L-lysyl-[protein] = N(6)-octanoyl-L-lysyl-[protein] + holo-[ACP] + H(+). It functions in the pathway protein modification; protein lipoylation via endogenous pathway; protein N(6)-(lipoyl)lysine from octanoyl-[acyl-carrier-protein]: step 1/2. Its function is as follows. Catalyzes the transfer of endogenously produced octanoic acid from octanoyl-acyl-carrier-protein onto the lipoyl domains of lipoate-dependent enzymes. Lipoyl-ACP can also act as a substrate although octanoyl-ACP is likely to be the physiological substrate. The protein is Octanoyltransferase of Rickettsia rickettsii (strain Iowa).